A 527-amino-acid polypeptide reads, in one-letter code: GMP synthase [glutamine-hydrolyzing] (527 aa).

The Glutamine amidotransferase type-1 domain occupies 4–202 (KILILDFGSQ…VLKICGAKPD (199 aa)). Cys-81 functions as the Nucleophile in the catalytic mechanism. Catalysis depends on residues His-176 and Glu-178. The GMPS ATP-PPase domain maps to 203 to 395 (WEMGNYIDEA…LGLPPSMVYR (193 aa)). ATP is bound at residue 230–236 (SGGVDSS).

In terms of assembly, homodimer.

It catalyses the reaction XMP + L-glutamine + ATP + H2O = GMP + L-glutamate + AMP + diphosphate + 2 H(+). It participates in purine metabolism; GMP biosynthesis; GMP from XMP (L-Gln route): step 1/1. Its function is as follows. Catalyzes the synthesis of GMP from XMP. This is GMP synthase [glutamine-hydrolyzing] from Paraburkholderia phymatum (strain DSM 17167 / CIP 108236 / LMG 21445 / STM815) (Burkholderia phymatum).